We begin with the raw amino-acid sequence, 127 residues long: Fluoride-specific ion channel FluC (127 aa).

A run of 4 helical transmembrane segments spans residues 7–27 (LLVA…GAWV), 31–51 (LGAG…FLIG), 68–88 (LFLA…SYET), and 97–117 (VGKA…LAFL). Na(+) is bound by residues Gly76 and Thr79.

Belongs to the fluoride channel Fluc/FEX (TC 1.A.43) family.

Its subcellular location is the cell inner membrane. The enzyme catalyses fluoride(in) = fluoride(out). Its activity is regulated as follows. Na(+) is not transported, but it plays an essential structural role and its presence is essential for fluoride channel function. Fluoride-specific ion channel. Important for reducing fluoride concentration in the cell, thus reducing its toxicity. The chain is Fluoride-specific ion channel FluC from Thermus thermophilus (strain ATCC BAA-163 / DSM 7039 / HB27).